We begin with the raw amino-acid sequence, 597 residues long: MFPVAPKPQDSNQPSDRLMTEKQQEEAEWESINVLLMMHGLKPLSLVKRTDLKDLIIFDKQSSQRMRQNLKLLVEETSRQQNMIQELIETNQQLRNELQLEHSRATNQEQRANDLEQIMESVKSKIGELEDESLNRACQQQNKIKDLQKEQRTLQVKCQHYKKKRTEQQETIASLQTEVCRLRKEEEDRIVTQNRVFAYLCKRVPHTVLDRQLLCLIDYYESKIRKIHTQRQYKEDESQSEEENDYRSLDASPTYKGLLMSLQNQLKESNSQIDALLSEKLNLQKDSETRPTQHELRLYKQQVKKLEKALKKSVKLQELISPKKAEDTEKKDEPSKYNQQQALIDQRYFQVLCSINSIIHNPRAPVIIYKQSKGGAQNFNKDLIQDCGFEHLVPIIEMWADQLTSLKDLYKSLKTLSAELVPWHNLKKQDENEGIKVEDLLFIVDTMLEEVENKEKDSNMPNFQTLQAIVSHFQKLFDVPSLNGVYPRMNEVYTRLGEMNNAVRNLQELLELDSSSSLCVLVSTVGKLCRLINEDVNEQIMQVLGPEDLQSIIYKLEEHEEFFPAFQAFTNDLLEILEIDDLDAIVPAVKKLKVLSY.

The tract at residues 1–24 is disordered; the sequence is MFPVAPKPQDSNQPSDRLMTEKQQ. 2 coiled-coil regions span residues 66–179 and 254–320; these read MRQN…QTEV and TYKG…QELI. A TPR repeat occupies 483-516; that stretch reads NGVYPRMNEVYTRLGEMNNAVRNLQELLELDSSS.

As to quaternary structure, directly interacts with tubulin-gamma; this interaction determines centrosomal localization.

It is found in the cytoplasm. It localises to the cytoskeleton. Its subcellular location is the microtubule organizing center. The protein resides in the centrosome. Its function is as follows. Plays a role in the organization of both preexisting and nascent microtubules in interphase cells. During mitosis, required for the organization and orientation of the mitotic spindle. The sequence is that of Centrosomal protein of 70 kDa (CEP70) from Macaca fascicularis (Crab-eating macaque).